The primary structure comprises 352 residues: Protein MGF 360-9L (352 aa).

This sequence belongs to the asfivirus MGF 360 family. As to quaternary structure, interacts with host STAT1; this interaction mediates STAT1 degradation through apoptosis. Interacts with host STAT2; this interaction mediates STAT2 degradation through the proteasome.

It localises to the host cytoplasm. Functionally, plays a role in virus cell tropism, and may be required for efficient virus replication in macrophages. The protein is Protein MGF 360-9L of Ornithodoros (relapsing fever ticks).